The following is a 90-amino-acid chain: Putative membrane protein insertion efficiency factor (90 aa).

The protein belongs to the UPF0161 family.

It is found in the cell membrane. Could be involved in insertion of integral membrane proteins into the membrane. The sequence is that of Putative membrane protein insertion efficiency factor from Oceanobacillus iheyensis (strain DSM 14371 / CIP 107618 / JCM 11309 / KCTC 3954 / HTE831).